A 429-amino-acid chain; its full sequence is ATP-dependent RNA helicase RhlB (429 aa).

A Q motif motif is present at residues 9–37 (DKFAQMGLEPEVLAGLESKGFHYCTPIQA). Residues 40-219 (LPLLVEGHDL…YEHMNHPEHV (180 aa)) form the Helicase ATP-binding domain. An ATP-binding site is contributed by 53–60 (AQTGTGKT). The DEAD box motif lies at 165-168 (DEAD). A Helicase C-terminal domain is found at 243 to 390 (KMLLLLSLME…VSKYDREALL (148 aa)). The disordered stretch occupies residues 399–429 (VFRNRQPVNRNMRDRQGGGNSNNRRRPPRKS).

Belongs to the DEAD box helicase family. RhlB subfamily. As to quaternary structure, component of the RNA degradosome, which is a multiprotein complex involved in RNA processing and mRNA degradation.

The protein localises to the cytoplasm. It carries out the reaction ATP + H2O = ADP + phosphate + H(+). Functionally, DEAD-box RNA helicase involved in RNA degradation. Has RNA-dependent ATPase activity and unwinds double-stranded RNA. This is ATP-dependent RNA helicase RhlB from Aeromonas hydrophila subsp. hydrophila (strain ATCC 7966 / DSM 30187 / BCRC 13018 / CCUG 14551 / JCM 1027 / KCTC 2358 / NCIMB 9240 / NCTC 8049).